A 352-amino-acid polypeptide reads, in one-letter code: Phosphoribosylformylglycinamidine cyclo-ligase (352 aa).

Belongs to the AIR synthase family.

The protein resides in the cytoplasm. It carries out the reaction 2-formamido-N(1)-(5-O-phospho-beta-D-ribosyl)acetamidine + ATP = 5-amino-1-(5-phospho-beta-D-ribosyl)imidazole + ADP + phosphate + H(+). It participates in purine metabolism; IMP biosynthesis via de novo pathway; 5-amino-1-(5-phospho-D-ribosyl)imidazole from N(2)-formyl-N(1)-(5-phospho-D-ribosyl)glycinamide: step 2/2. In Pseudomonas entomophila (strain L48), this protein is Phosphoribosylformylglycinamidine cyclo-ligase.